A 237-amino-acid chain; its full sequence is Large ribosomal subunit protein uL2 (237 aa).

Over residues 1–11 (MGKRIISQNRG) the composition is skewed to polar residues. 2 disordered regions span residues 1-20 (MGKR…YRAP) and 201-237 (FGGG…GVRR).

The protein belongs to the universal ribosomal protein uL2 family. In terms of assembly, part of the 50S ribosomal subunit. Forms a bridge to the 30S subunit in the 70S ribosome.

One of the primary rRNA binding proteins. Required for association of the 30S and 50S subunits to form the 70S ribosome, for tRNA binding and peptide bond formation. It has been suggested to have peptidyltransferase activity; this is somewhat controversial. Makes several contacts with the 16S rRNA in the 70S ribosome. The chain is Large ribosomal subunit protein uL2 from Archaeoglobus fulgidus (strain ATCC 49558 / DSM 4304 / JCM 9628 / NBRC 100126 / VC-16).